The sequence spans 423 residues: tRNA(Ile)-lysidine synthase (423 aa).

An ATP-binding site is contributed by 43-48 (SSGVDS).

The protein belongs to the tRNA(Ile)-lysidine synthase family.

It is found in the cytoplasm. It carries out the reaction cytidine(34) in tRNA(Ile2) + L-lysine + ATP = lysidine(34) in tRNA(Ile2) + AMP + diphosphate + H(+). Ligates lysine onto the cytidine present at position 34 of the AUA codon-specific tRNA(Ile) that contains the anticodon CAU, in an ATP-dependent manner. Cytidine is converted to lysidine, thus changing the amino acid specificity of the tRNA from methionine to isoleucine. This is tRNA(Ile)-lysidine synthase from Helicobacter hepaticus (strain ATCC 51449 / 3B1).